Reading from the N-terminus, the 304-residue chain is Transmembrane protein 178A (304 aa).

A signal peptide spans 1–25 (MESRGLVTAVSLTLSICSLLLLVTA). The Extracellular segment spans residues 26-186 (IFTDHWYETD…LLHLRRITAG (161 aa)). A glycan (N-linked (GlcNAc...) asparagine) is linked at Asn165. A helical membrane pass occupies residues 187 to 207 (FLGMAAAVLLCGCIVAAISFF). Topologically, residues 208–215 (WEESLTQH) are cytoplasmic. Residues 216–236 (VAGLLFLMTGIFCTISLCTYA) traverse the membrane as a helical segment. Over 237-267 (ASVAYELNRQPKFIYGLPSDVEHGYSWSLFC) the chain is Extracellular. Residues 268–288 (AWCSLGLIVAAGCLCTAYPFI) traverse the membrane as a helical segment. Topologically, residues 289–304 (SRTKILHLKFARDSCV) are cytoplasmic.

It belongs to the TMEM178 family.

Its subcellular location is the endoplasmic reticulum membrane. In terms of biological role, may act as a negative regulator of osteoclast differentiation. The protein is Transmembrane protein 178A (tmem178a) of Xenopus laevis (African clawed frog).